The following is a 435-amino-acid chain: Ras association domain-containing protein 9 (435 aa).

The interval 1 to 22 (MAPFGRNLLKTRHKNRSPTKDM) is disordered. The region spanning 25–119 (EEKEIVVWVC…MQFVLVKADA (95 aa)) is the Ras-associating domain. The stretch at 195 to 290 (HTIHQQVKRM…DKLSAEIEKE (96 aa)) forms a coiled coil. The interval 380 to 435 (NRAKESEVPSSNGEIPPFTQRVFSNYTNDTDSDTGISSNHSQDSETTVGDVVLLST) is disordered. Polar residues predominate over residues 400-426 (RVFSNYTNDTDSDTGISSNHSQDSETT).

In terms of assembly, interacts with PAM.

The protein resides in the endosome. Its function is as follows. May play a role in regulating vesicuar trafficking in cells. In Homo sapiens (Human), this protein is Ras association domain-containing protein 9 (RASSF9).